Reading from the N-terminus, the 253-residue chain is 2-C-methyl-D-erythritol 4-phosphate cytidylyltransferase (253 aa).

This sequence belongs to the IspD/TarI cytidylyltransferase family. IspD subfamily.

It carries out the reaction 2-C-methyl-D-erythritol 4-phosphate + CTP + H(+) = 4-CDP-2-C-methyl-D-erythritol + diphosphate. The protein operates within isoprenoid biosynthesis; isopentenyl diphosphate biosynthesis via DXP pathway; isopentenyl diphosphate from 1-deoxy-D-xylulose 5-phosphate: step 2/6. In terms of biological role, catalyzes the formation of 4-diphosphocytidyl-2-C-methyl-D-erythritol from CTP and 2-C-methyl-D-erythritol 4-phosphate (MEP). This is 2-C-methyl-D-erythritol 4-phosphate cytidylyltransferase from Idiomarina loihiensis (strain ATCC BAA-735 / DSM 15497 / L2-TR).